Consider the following 550-residue polypeptide: Chaperonin GroEL (550 aa).

Residues 30–33 (TLGP), Lys51, 87–91 (DGTTT), Gly415, and Asp497 contribute to the ATP site.

Belongs to the chaperonin (HSP60) family. Forms a cylinder of 14 subunits composed of two heptameric rings stacked back-to-back. Interacts with the co-chaperonin GroES.

The protein localises to the cytoplasm. The catalysed reaction is ATP + H2O + a folded polypeptide = ADP + phosphate + an unfolded polypeptide.. Its function is as follows. Together with its co-chaperonin GroES, plays an essential role in assisting protein folding. The GroEL-GroES system forms a nano-cage that allows encapsulation of the non-native substrate proteins and provides a physical environment optimized to promote and accelerate protein folding. In Yersinia enterocolitica serotype O:8 / biotype 1B (strain NCTC 13174 / 8081), this protein is Chaperonin GroEL.